A 95-amino-acid chain; its full sequence is Large ribosomal subunit protein bL25 (95 aa).

Belongs to the bacterial ribosomal protein bL25 family. Part of the 50S ribosomal subunit; part of the 5S rRNA/L5/L18/L25 subcomplex. Contacts the 5S rRNA. Binds to the 5S rRNA independently of L5 and L18.

Functionally, this is one of the proteins that binds to the 5S RNA in the ribosome where it forms part of the central protuberance. The chain is Large ribosomal subunit protein bL25 from Mannheimia succiniciproducens (strain KCTC 0769BP / MBEL55E).